The sequence spans 390 residues: Magnesium-protoporphyrin IX monomethyl ester [oxidative] cyclase (390 aa).

The protein belongs to the AcsF family. It depends on Fe cation as a cofactor.

It carries out the reaction Mg-protoporphyrin IX 13-monomethyl ester + 3 NADPH + 3 O2 + 2 H(+) = 3,8-divinyl protochlorophyllide a + 3 NADP(+) + 5 H2O. It functions in the pathway porphyrin-containing compound metabolism; chlorophyll biosynthesis (light-independent). In terms of biological role, catalyzes the formation of the isocyclic ring in chlorophyll biosynthesis. Mediates the cyclase reaction, which results in the formation of divinylprotochlorophyllide (Pchlide) characteristic of all chlorophylls from magnesium-protoporphyrin IX 13-monomethyl ester (MgPMME). In Prochlorococcus marinus subsp. pastoris (strain CCMP1986 / NIES-2087 / MED4), this protein is Magnesium-protoporphyrin IX monomethyl ester [oxidative] cyclase.